The following is a 96-amino-acid chain: Prokineticin Bv8 (96 aa).

The signal sequence occupies residues 1-19 (MKCFAQIVVLLLVIAFSHG). Residues 20–24 (AVITG) are may be important for binding to prokineticin receptor 2. 5 cysteine pairs are disulfide-bonded: Cys26/Cys38, Cys32/Cys50, Cys37/Cys78, Cys60/Cys86, and Cys80/Cys95.

As to expression, expressed by the skin glands.

Its subcellular location is the secreted. In terms of biological role, potent agonist for both PKR1/PROKR1 and PKR2/PROKR2, and inducer of a potent and long-lasting hyperalgesia. Shows an EC(50) of 0.264 nM, when tested on neuroblastoma cells (SH-SY5Y) which endogenously express mainly PKR2/PROKR2. Also potentiates capsaicin-induced TRPV1 current, when tested on DRG neurons. Induces a biphasic hyperalgesia to tactile and thermal stimuli after systemic injection of this protein into rat. The initial phase of hyperalgesia is caused by a local action on nociceptors, because intraplantar injection of this protein causes a strong and localized hyperalgesia with a similar time course to that of the initial phase of hyperalgesia seen with systemic injection. The secondary phase of hyperalgesia is not seen with local intraplantar injection and is therefore probably attributable to a central action of this protein. At subnanomolar concentrations, this protein both induces potent chemotaxis of macrophages and stimulates LPS-induced production of the pro-inflammatory cytokines IL-1 and IL-12. In vivo, this protein potently stimulates the contraction of the guinea-pig gastrointestinal (GI) smooth muscle (at nanomolar concentration). This Bombina variegata (Yellow-bellied toad) protein is Prokineticin Bv8.